The chain runs to 69 residues: uncharacterized protein (69 aa).

The signal sequence occupies residues 1-16 (MKKIMLFLAMTSILSA). Cys17 carries the N-palmitoyl cysteine lipid modification. Cys17 carries S-diacylglycerol cysteine lipidation.

The protein resides in the cell membrane. This is an uncharacterized protein from Bacillus subtilis (strain 168).